A 426-amino-acid chain; its full sequence is Trophoblast glycoprotein (426 aa).

Residues 1-31 form the signal peptide; sequence MPGAGSRGPSAGDGRLRLARLALVLLGWVSA. The Extracellular portion of the chain corresponds to 32–361; it reads SAPSSSVPSS…AVLPQSLQTS (330 aa). Residues 33–47 are compositionally biased toward low complexity; the sequence is APSSSVPSSSTSPAA. The interval 33–53 is disordered; the sequence is APSSSVPSSSTSPAAFLASGS. The LRRNT domain maps to 53-91; that stretch reads SAQPPPAERCPAACECSEAARTVKCVNRNLLEVPADLPP. 2 disulfide bridges follow: Cys62/Cys68 and Cys66/Cys77. 7 LRR repeats span residues 92–113, 116–139, 141–163, 172–210, 215–238, 239–261, and 262–281; these read YVRN…AFAR, PLAD…GAFE, LPGL…FAFA, PSPL…AALR, LRGL…LLAQ, LPSL…ASFR, and NLTH…VLHN. The N-linked (GlcNAc...) asparagine glycan is linked to Asn124. Asn281 carries an N-linked (GlcNAc...) asparagine glycan. In terms of domain architecture, LRRCT spans 289-352; that stretch reads GLAHVKVFLD…LNSSDLDCDA (64 aa). Cystine bridges form between Cys304-Cys329 and Cys306-Cys350. The helical transmembrane segment at 362–382 threads the bilayer; it reads YVFLGIVLALIGAIFLLVLYL. The Cytoplasmic portion of the chain corresponds to 383–426; it reads NRKGIKKWMHNIRDACRDHMEGYHYRYEINADPRLTNLSSNSDV. Ser424 carries the post-translational modification Phosphoserine.

Highly glycosylated. In terms of tissue distribution, highly expressed in embryo and placenta. In adult, expressed only in brain and ovary. Not detected in kidney small intestine, heart, spleen, testis, liver, lung, thymus and stomach.

It is found in the cell membrane. In terms of biological role, may function as an inhibitor of Wnt/beta-catenin signaling by indirectly interacting with LRP6 and blocking Wnt3a-dependent LRP6 internalization. This chain is Trophoblast glycoprotein (Tpbg), found in Mus musculus (Mouse).